The sequence spans 290 residues: Multiple sugar-binding transport system permease protein MsmF (290 aa).

The next 7 membrane-spanning stretches (helical) occupy residues 12–32 (GWTF…FPMF), 72–92 (FTLV…IIIA), 104–124 (FFRA…SLIF), 156–176 (VIAS…ILFL), 201–221 (FWSV…IMAL), 231–253 (IFAL…VYNY), and 260–280 (YGYA…VSVL). The 212-residue stretch at 70–281 (IGFTLVLTLA…IIIGIVSVLQ (212 aa)) folds into the ABC transmembrane type-1 domain.

This sequence belongs to the binding-protein-dependent transport system permease family. MalFG subfamily.

It localises to the cell membrane. Its function is as follows. Involved in a binding protein-dependent transport system responsible for the uptake of melibiose, raffinose and isomaltotriose. The sequence is that of Multiple sugar-binding transport system permease protein MsmF (msmF) from Streptococcus mutans serotype c (strain ATCC 700610 / UA159).